Here is a 139-residue protein sequence, read N- to C-terminus: Protein PsiE homolog (139 aa).

Helical transmembrane passes span 20–40 (IVLCTALIALAIVLIIALVKI), 60–80 (AEQAVMFFLYFGFIGLIVQYF), 85–105 (HFPLRYFIYAGITAMLRLIIV), and 111–131 (VDTILFAGAILIMVIALCLVL).

The protein belongs to the PsiE family.

Its subcellular location is the cell inner membrane. This Haemophilus influenzae (strain 86-028NP) protein is Protein PsiE homolog.